Reading from the N-terminus, the 89-residue chain is Small ribosomal subunit protein uS15 (89 aa).

Belongs to the universal ribosomal protein uS15 family. As to quaternary structure, part of the 30S ribosomal subunit. Forms a bridge to the 50S subunit in the 70S ribosome, contacting the 23S rRNA.

Functionally, one of the primary rRNA binding proteins, it binds directly to 16S rRNA where it helps nucleate assembly of the platform of the 30S subunit by binding and bridging several RNA helices of the 16S rRNA. Its function is as follows. Forms an intersubunit bridge (bridge B4) with the 23S rRNA of the 50S subunit in the ribosome. This Rhizobium meliloti (strain 1021) (Ensifer meliloti) protein is Small ribosomal subunit protein uS15.